The chain runs to 499 residues: Lanosterol 14-alpha demethylase (499 aa).

The helical transmembrane segment at 13–35 threads the bilayer; sequence SAVLQMSLTSVLLTASVFTLTLG. Position 441 (Cys441) interacts with heme.

It belongs to the cytochrome P450 family. The cofactor is heme. Strongly expressed in intestine. Moderately expressed in liver, with higher levels in females compared to males. Also detected at low levels in brain, eye, kidney and testis.

It localises to the endoplasmic reticulum membrane. Its subcellular location is the membrane. The enzyme catalyses a 14alpha-methyl steroid + 3 reduced [NADPH--hemoprotein reductase] + 3 O2 = a Delta(14) steroid + formate + 3 oxidized [NADPH--hemoprotein reductase] + 4 H2O + 4 H(+). It catalyses the reaction lanosterol + 3 reduced [NADPH--hemoprotein reductase] + 3 O2 = 4,4-dimethyl-5alpha-cholesta-8,14,24-trien-3beta-ol + formate + 3 oxidized [NADPH--hemoprotein reductase] + 4 H2O + 4 H(+). The catalysed reaction is 24,25-dihydrolanosterol + 3 reduced [NADPH--hemoprotein reductase] + 3 O2 = 4,4-dimethyl-8,14-cholestadien-3beta-ol + formate + 3 oxidized [NADPH--hemoprotein reductase] + 4 H2O + 4 H(+). It carries out the reaction a 14alpha-methyl steroid + reduced [NADPH--hemoprotein reductase] + O2 = a 14alpha-hydroxymethyl steroid + oxidized [NADPH--hemoprotein reductase] + H2O + H(+). The enzyme catalyses a 14alpha-hydroxymethyl steroid + reduced [NADPH--hemoprotein reductase] + O2 = a 14alpha-formyl steroid + oxidized [NADPH--hemoprotein reductase] + 2 H2O + H(+). It catalyses the reaction a 14alpha-formyl steroid + reduced [NADPH--hemoprotein reductase] + O2 = a Delta(14) steroid + formate + oxidized [NADPH--hemoprotein reductase] + H2O + 2 H(+). The catalysed reaction is lanosterol + reduced [NADPH--hemoprotein reductase] + O2 = 32-hydroxylanosterol + oxidized [NADPH--hemoprotein reductase] + H2O + H(+). It carries out the reaction 32-hydroxylanosterol + reduced [NADPH--hemoprotein reductase] + O2 = 32-oxolanosterol + oxidized [NADPH--hemoprotein reductase] + 2 H2O + H(+). The enzyme catalyses 32-oxolanosterol + reduced [NADPH--hemoprotein reductase] + O2 = 4,4-dimethyl-5alpha-cholesta-8,14,24-trien-3beta-ol + formate + oxidized [NADPH--hemoprotein reductase] + H2O + 2 H(+). It catalyses the reaction 24,25-dihydrolanosterol + reduced [NADPH--hemoprotein reductase] + O2 = 32-hydroxy-24,25-dihydrolanosterol + oxidized [NADPH--hemoprotein reductase] + H2O + H(+). The catalysed reaction is 32-hydroxy-24,25-dihydrolanosterol + reduced [NADPH--hemoprotein reductase] + O2 = 32-oxo-24,25-dihydrolanosterol + oxidized [NADPH--hemoprotein reductase] + 2 H2O + H(+). It carries out the reaction 32-oxo-24,25-dihydrolanosterol + reduced [NADPH--hemoprotein reductase] + O2 = 4,4-dimethyl-8,14-cholestadien-3beta-ol + formate + oxidized [NADPH--hemoprotein reductase] + H2O + 2 H(+). Its pathway is steroid biosynthesis; zymosterol biosynthesis; zymosterol from lanosterol: step 1/6. Inhibited by ketoconazole. May also be inhibited to a lesser extent by propiconazole. In terms of biological role, sterol 14alpha-demethylase that plays a critical role in the cholesterol biosynthesis pathway, being cholesterol the major sterol component in deuterostome membranes as well as a precursor for steroid hormone synthesis. Cytochrome P450 monooxygenase that catalyzes the three-step oxidative removal of the 14alpha-methyl group (C-32) of sterols such as lanosterol (lanosta-8,24-dien-3beta-ol) and 24,25-dihydrolanosterol (DHL) in the form of formate, and converts the sterols to 4,4-dimethyl-5alpha-cholesta-8,14,24-trien-3beta-ol and 4,4-dimethyl-8,14-cholestadien-3beta-ol, respectively, which are intermediates of cholesterol biosynthesis. Can also demethylate substrates not intrinsic to deuterostomes, such as eburicol (24-methylene-24,25-dihydrolanosterol), but at a lower rate than DHL. This chain is Lanosterol 14-alpha demethylase, found in Danio rerio (Zebrafish).